Here is a 94-residue protein sequence, read N- to C-terminus: Small ribosomal subunit protein uS19 (94 aa).

This sequence belongs to the universal ribosomal protein uS19 family.

Functionally, protein S19 forms a complex with S13 that binds strongly to the 16S ribosomal RNA. The protein is Small ribosomal subunit protein uS19 of Wolbachia pipientis subsp. Culex pipiens (strain wPip).